The chain runs to 351 residues: Inhibin beta C chain (351 aa).

Positions 1-18 are cleaved as a signal peptide; the sequence is MASSLLLALLFLTLATVV. Residues 19–236 constitute a propeptide that is removed on maturation; the sequence is NLKTDGPCPA…EGKHRVRRRG (218 aa). 3 N-linked (GlcNAc...) asparagine glycosylation sites follow: Asn-110, Asn-142, and Asn-160. 4 disulfide bridges follow: Cys-239/Cys-247, Cys-246/Cys-316, Cys-275/Cys-348, and Cys-279/Cys-350.

It belongs to the TGF-beta family. Homodimeric or heterodimeric through association with alpha and beta subunits, linked by one or more disulfide bonds. Inhibins are heterodimers of one alpha and one beta subunit. Activins are homo- or heterodimers of beta subunits only.

The protein localises to the secreted. Its function is as follows. Inhibins and activins inhibit and activate, respectively, the secretion of follitropin by the pituitary gland. Inhibins/activins are involved in regulating a number of diverse functions such as hypothalamic and pituitary hormone secretion, gonadal hormone secretion, germ cell development and maturation, erythroid differentiation, insulin secretion, nerve cell survival, embryonic axial development or bone growth, depending on their subunit composition. Inhibins appear to oppose the functions of activins. This is Inhibin beta C chain (Inhbc) from Rattus norvegicus (Rat).